A 107-amino-acid polypeptide reads, in one-letter code: U1-lycotoxin-Ls1x (107 aa).

An N-terminal signal peptide occupies residues 1 to 20 (MMKVLVVVALLVTLISYSSS). A propeptide spanning residues 21–41 (EGIDDLEADELLSLMANEHPR) is cleaved from the precursor. 4 cysteine pairs are disulfide-bonded: Cys44-Cys59, Cys51-Cys68, Cys58-Cys86, and Cys70-Cys84.

This sequence belongs to the neurotoxin 19 (CSTX) family. 04 (U1-Lctx) subfamily. As to expression, expressed by the venom gland.

It localises to the secreted. This chain is U1-lycotoxin-Ls1x, found in Lycosa singoriensis (Wolf spider).